The sequence spans 243 residues: Protein unc-119 homolog B (243 aa).

Residues 1–21 show a composition bias toward polar residues; that stretch reads MNSQSSRNETAATAVNGSDSA. Positions 1–49 are disordered; sequence MNSQSSRNETAATAVNGSDSAAASRDHKSGGGVLKRLKSRRNQVDRRPV. Tyrosine 134 serves as a coordination point for tetradecanoate.

Belongs to the PDE6D/unc-119 family. In terms of tissue distribution, detected in embryo. Detected in larvae four days after fertilization, in retina and neural tissues (at protein level). Detected in embryos at the sphere stage, during gastrulation, somitogenesis and in swimming larvae, both within and outside of the developing nervous system. Detected in adults.

The protein resides in the cell projection. Its subcellular location is the cilium. Its function is as follows. Myristoyl-binding protein that acts as a cargo adapter: specifically binds the myristoyl moiety of a subset of N-terminally myristoylated proteins and is required for their localization. Plays a key role in localization of proteins to the primary cilium membrane. This Danio rerio (Zebrafish) protein is Protein unc-119 homolog B (unc119b).